Consider the following 440-residue polypeptide: Chromosome partition protein MukF (440 aa).

Residues 208-236 (LSETSGTLRELQDTLEAAGDKLQANLLRI) are leucine-zipper.

The protein belongs to the MukF family. As to quaternary structure, interacts, and probably forms a ternary complex, with MukE and MukB via its C-terminal region. The complex formation is stimulated by calcium or magnesium. It is required for an interaction between MukE and MukB.

The protein localises to the cytoplasm. The protein resides in the nucleoid. Involved in chromosome condensation, segregation and cell cycle progression. May participate in facilitating chromosome segregation by condensation DNA from both sides of a centrally located replisome during cell division. Not required for mini-F plasmid partitioning. Probably acts via its interaction with MukB and MukE. Overexpression results in anucleate cells. It has a calcium binding activity. In Escherichia coli O17:K52:H18 (strain UMN026 / ExPEC), this protein is Chromosome partition protein MukF.